The following is an 867-amino-acid chain: RNA-directed RNA polymerase (867 aa).

Residue 249–256 coordinates GTP; that stretch reads GLPFIGKT. Residues 387-591 enclose the RdRp catalytic domain; the sequence is LIYADNIYIY…DKERLLSSAA (205 aa). Residues 845–867 form a disordered region; sequence EGALTKNARKMKKRREKARGINH. Positions 851–867 are enriched in basic residues; that stretch reads NARKMKKRREKARGINH.

Interacts with VP3 in the cytoplasm. Post-translationally, may exist in multiple phosphorylated forms.

It is found in the virion. It catalyses the reaction RNA(n) + a ribonucleoside 5'-triphosphate = RNA(n+1) + diphosphate. RNA-dependent RNA polymerase which is found both free and covalently attached to the genomic RNA. May also contain guanylyl and methyl transferase activities. This Blotched snakehead virus (BSNV) protein is RNA-directed RNA polymerase (VP1).